The chain runs to 97 residues: Small ribosomal subunit protein uS17 (97 aa).

A disordered region spans residues 1-20; that stretch reads MSEATVNDNAAVKNEKGARK.

It belongs to the universal ribosomal protein uS17 family. In terms of assembly, part of the 30S ribosomal subunit.

Its function is as follows. One of the primary rRNA binding proteins, it binds specifically to the 5'-end of 16S ribosomal RNA. The sequence is that of Small ribosomal subunit protein uS17 from Corynebacterium jeikeium (strain K411).